Here is a 223-residue protein sequence, read N- to C-terminus: Homeobox protein egl-5 (223 aa).

The span at 1 to 25 (MNTSTSAFDFGSSTASSAATSTTSS) shows a compositional bias: low complexity. 2 disordered regions span residues 1–58 (MNTS…STEA) and 168–191 (KKEK…PPKG). Residues 112–171 (SKKGRQTYQRYQTSVLEAKFQQSSYVSKKQREELRLQTQLTDRQIKIWFQNRRMKAKKEK) constitute a DNA-binding region (homeobox).

The protein belongs to the Abd-B homeobox family. In terms of assembly, interacts with the TCF transcription factor pop-1.

The protein resides in the nucleus. Functionally, involved in control of cell fate and pattern formation along the anterior-posterior axis, acting mainly in the tail. Required during embryonic and postembryonic development. Essential for the determination of specific neurons, including the PLM touch neurons. Plays a role in neural fate specification in the hermaphrodite-specific neuron (HSN)/PHB neuron lineage, acting in concert with T-box protein tbx-2 and the asymmetric cell division protein ham-1. Required for male gonadal fate determination, acting in parallel with a WNT/beta-catenin pathway, perhaps by recruiting pop-1 to male-specific gonadal target genes. Involved in development of the hermaphrodite hindgut, and for the response to rectal infection by the coryneform bacterium M.nematophilum. This chain is Homeobox protein egl-5, found in Caenorhabditis elegans.